We begin with the raw amino-acid sequence, 77 residues long: Dermatoxin-S1 (77 aa).

The signal sequence occupies residues 1-22 (MAFLKKSLFLILFLGLVPLSFC). Residues 23–44 (ENDKREGENEEEQDDDQSEEKR) constitute a propeptide that is removed on maturation. Q76 carries the glutamine amide modification.

Expressed by the skin glands.

It localises to the secreted. The protein resides in the target cell membrane. Its function is as follows. Antimicrobial peptide with potent activity against Gram-positive bacteria B.megaterium, C.glutamicum and S.aureus and mollicutes A.laidlawii and S.melliferum. Less active against Gram-negative bacteria B.cepacia, P.aeruginosa, S.typhimurium and S.meliloti. Probably acts by disturbing membrane functions with its amphipathic structure. In Phyllomedusa sauvagei (Sauvage's leaf frog), this protein is Dermatoxin-S1.